Here is a 480-residue protein sequence, read N- to C-terminus: MVERKRWSEEFSEWFNEVIEEAGILDKRYPVKGMNVWLPYGLKIMRNIEKFIHEEMERTGHQEVLFPALIPETEFKKEAEHIAGFEGEVFWVTHAGHEPLDVRLVLRPTSETAMYSMFALWIRSHADLPFKVYQIVNVYRYETKHTRPLIRVREISRFFEAHTAHADFEDAERQIKEDLEIFDNLMRKLALAYIISKRPEWDKFPGAFYSLGAEVVMPDGRTLQIGTMHNYKQNFSKAYNILYEKEDGTHDYVHQTTFGMSERLLAAVIAIHGDDRGMVLPPTIAPIQVVIVPIPKKGSEEEVYSYAKGIEEELRDAGIRVYLDLRDKRPGWKFYDWELKGVPVRVEVGPIDVQNSTVVLARRDKLEKITVKREELVDKVRELFEDIMEFLYERANEWLESHIKRVDTLEEAKAVFEDRRGIVEIPWCGEESCGLKMEEELEAKMLGIPYPEEKAKAPEGSKCPVCGREAKFIARFARTY.

The protein belongs to the class-II aminoacyl-tRNA synthetase family. ProS type 3 subfamily. In terms of assembly, homodimer.

It localises to the cytoplasm. The enzyme catalyses tRNA(Pro) + L-proline + ATP = L-prolyl-tRNA(Pro) + AMP + diphosphate. Functionally, catalyzes the attachment of proline to tRNA(Pro) in a two-step reaction: proline is first activated by ATP to form Pro-AMP and then transferred to the acceptor end of tRNA(Pro). The polypeptide is Proline--tRNA ligase (Pyrococcus horikoshii (strain ATCC 700860 / DSM 12428 / JCM 9974 / NBRC 100139 / OT-3)).